A 326-amino-acid polypeptide reads, in one-letter code: WRKY transcription factor 8 (326 aa).

The interval 115–172 is disordered; the sequence is VRVSASPSSSEADHHPGEDSGKIRKKREVRDGGEDDQRSQKVVKTKKKEEKKKEPRVS. Composition is skewed to basic and acidic residues over residues 125–153 and 161–170; these read EADH…DQRS and KKEEKKKEPR. Positions 177 to 242 form a DNA-binding region, WRKY; it reads TEVDHLEDGY…YESQHNHPIP (66 aa).

The protein belongs to the WRKY group II-c family. As to quaternary structure, interacts with VQ9 (via N-terminus). As to expression, highly expressed in roots and at lower levels in rosette leaves, cauline leaves, stems, flowers and siliques.

The protein resides in the nucleus. In terms of biological role, transcription factor. Interacts specifically with the W box (5'-TTGAC[CT]-3'), a frequently occurring stress-responsive cis-acting element. Functions as a positive regulator of salt stress response. Binds the W box of LTI78/RD29A stress-response gene and directly regulates its transcription under salt stress. Functions antagonistically with VQ9 to regulate sodium and potassium homeostasis under salt stress by regulating the expression of downstream SOS (SALT OVERLY SENSITIVE) stress-responsive genes. The DNA-binding activity of WRKY8 is decreased by VQ9. Functions as a negative regulator of basal resistance to the bacterial pathogen P.syringae and as positive regulator of resistance to the fungal pathogen to B.cinerea. Functions as a positive regulator of defense response againt tobamovirus (TMV) by regulating both the abscisic acid and ethylene signaling pathways. Positively regulates ABI4 expression and negatively modulates ACS6 and ERF104 expression by directly binding to the W box consensus motifs within their promoters. The polypeptide is WRKY transcription factor 8 (WRKY8) (Arabidopsis thaliana (Mouse-ear cress)).